A 202-amino-acid chain; its full sequence is Xanthine phosphoribosyltransferase (202 aa).

Xanthine contacts are provided by Leu20 and Asn27. A 5-phospho-alpha-D-ribose 1-diphosphate-binding site is contributed by 128-132; it reads ASGGT. Residue Lys156 coordinates xanthine.

The protein belongs to the purine/pyrimidine phosphoribosyltransferase family. Xpt subfamily. Homodimer.

It is found in the cytoplasm. The enzyme catalyses XMP + diphosphate = xanthine + 5-phospho-alpha-D-ribose 1-diphosphate. The protein operates within purine metabolism; XMP biosynthesis via salvage pathway; XMP from xanthine: step 1/1. Functionally, converts the preformed base xanthine, a product of nucleic acid breakdown, to xanthosine 5'-monophosphate (XMP), so it can be reused for RNA or DNA synthesis. In Deinococcus geothermalis (strain DSM 11300 / CIP 105573 / AG-3a), this protein is Xanthine phosphoribosyltransferase.